Consider the following 584-residue polypeptide: tRNA-guanine(15) transglycosylase (584 aa).

The active-site Nucleophile is the aspartate 95. The substrate site is built by aspartate 130 and glycine 196. Residues cysteine 279, cysteine 281, and cysteine 284 each coordinate Zn(2+). Positions 507–582 (RMRVVVSEEA…RAVKVRRGIS (76 aa)) constitute a PUA domain.

The protein belongs to the archaeosine tRNA-ribosyltransferase family. Zn(2+) serves as cofactor.

It catalyses the reaction guanosine(15) in tRNA + 7-cyano-7-deazaguanine = 7-cyano-7-carbaguanosine(15) in tRNA + guanine. The protein operates within tRNA modification; archaeosine-tRNA biosynthesis. Functionally, exchanges the guanine residue with 7-cyano-7-deazaguanine (preQ0) at position 15 in the dihydrouridine loop (D-loop) of archaeal tRNAs. The polypeptide is tRNA-guanine(15) transglycosylase (Pyrococcus abyssi (strain GE5 / Orsay)).